We begin with the raw amino-acid sequence, 763 residues long: Translation initiation factor IF-2, chloroplastic (763 aa).

3 disordered regions span residues 1 to 22 (MFLN…NNSS), 52 to 122 (IDKS…SNSA), and 149 to 168 (NNKI…DQSI). Residues 13–22 (SSYSTNNNSS) show a composition bias toward low complexity. Over residues 73–92 (RIDKKNKNFNKAHDLLDNKK) the composition is skewed to basic and acidic residues. The segment covering 93 to 104 (NKNRQRKKIKNK) has biased composition (basic residues). Over residues 151-168 (KIPQQKKQQVASSIDQSI) the composition is skewed to polar residues. The 169-residue stretch at 261-429 (NRPPVVTILG…ILLLAELENL (169 aa)) folds into the tr-type G domain. GTP contacts are provided by residues 270–277 (GHVDHGKT), 316–320 (DTPGH), and 370–373 (SKID).

The protein belongs to the TRAFAC class translation factor GTPase superfamily. Classic translation factor GTPase family. IF-2 subfamily.

It is found in the plastid. The protein localises to the chloroplast. Its function is as follows. One of the essential components for the initiation of protein synthesis. Protects formylmethionyl-tRNA from spontaneous hydrolysis and promotes its binding to the 30S ribosomal subunits. Also involved in the hydrolysis of GTP during the formation of the 70S ribosomal complex. The polypeptide is Translation initiation factor IF-2, chloroplastic (infB) (Porphyra purpurea (Red seaweed)).